The following is a 449-amino-acid chain: mRNA-capping enzyme subunit alpha (449 aa).

Residue Lys66 is the N6-GMP-lysine intermediate of the active site. The tract at residues 405–449 is disordered; that stretch reads DERKNGAYQHHSSSFSESRQQPKAEPVAEKKQTEPKYVDDDDWSD. Positions 414-423 are enriched in polar residues; that stretch reads HHSSSFSESR. Positions 424-442 are enriched in basic and acidic residues; that stretch reads QQPKAEPVAEKKQTEPKYV.

This sequence belongs to the eukaryotic GTase family. In terms of assembly, heterodimer. The mRNA-capping enzyme is composed of two separate chains alpha and beta, respectively a mRNA guanylyltransferase and an mRNA 5'-triphosphate monophosphatase.

It localises to the nucleus. The enzyme catalyses a 5'-end diphospho-ribonucleoside in mRNA + GTP + H(+) = a 5'-end (5'-triphosphoguanosine)-ribonucleoside in mRNA + diphosphate. Functionally, second step of mRNA capping. Transfer of the GMP moiety of GTP to the 5'-end of RNA via an enzyme-GMP covalent reaction intermediate. This Candida glabrata (strain ATCC 2001 / BCRC 20586 / JCM 3761 / NBRC 0622 / NRRL Y-65 / CBS 138) (Yeast) protein is mRNA-capping enzyme subunit alpha (CEG1).